We begin with the raw amino-acid sequence, 536 residues long: Chaperonin GroEL 2 (536 aa).

ATP contacts are provided by residues 29 to 32 (TLGP), Lys50, Gly416, and Asp497.

Belongs to the chaperonin (HSP60) family. Forms a cylinder of 14 subunits composed of two heptameric rings stacked back-to-back. Interacts with the co-chaperonin GroES.

It is found in the cytoplasm. It catalyses the reaction ATP + H2O + a folded polypeptide = ADP + phosphate + an unfolded polypeptide.. In terms of biological role, together with its co-chaperonin GroES, plays an essential role in assisting protein folding. The GroEL-GroES system forms a nano-cage that allows encapsulation of the non-native substrate proteins and provides a physical environment optimized to promote and accelerate protein folding. This is Chaperonin GroEL 2 from Chlamydia caviae (strain ATCC VR-813 / DSM 19441 / 03DC25 / GPIC) (Chlamydophila caviae).